The primary structure comprises 1487 residues: MIRLGAPQTLVLLTLLVAAVLRCQGQDVQEAGSCVQDGQRYNDKDVWKPEPCRICVCDTGTVLCDDIICEDVKDCLSPEIPFGECCPICPTDLATASGQPGPKGQKGEPGDIKDIVGPKGPPGPQGPAGEQGPRGDRGDKGEKGAPGPRGRDGEPGTPGNPGPPGPPGPPGPPGLGGNFAAQMAGGFDEKAGGAQLGVMQGPMGPMGPRGPPGPAGAPGPQGFQGNPGEPGEPGVSGPMGPRGPPGPPGKPGDDGEAGKPGKAGERGPPGPQGARGFPGTPGLPGVKGHRGYPGLDGAKGEAGAPGVKGESGSPGENGSPGPMGPRGLPGERGRTGPAGAAGARGNDGQPGPAGPPGPVGPAGGPGFPGAPGAKGEAGPTGARGPEGAQGPRGEPGTPGSPGPAGASGNPGTDGIPGAKGSAGAPGIAGAPGFPGPRGPPGPQGATGPLGPKGQTGEPGIAGFKGEQGPKGEPGPAGPQGAPGPAGEEGKRGARGEPGGVGPIGPPGERGAPGNRGFPGQDGLAGPKGAPGERGPSGLAGPKGANGDPGRPGEPGLPGARGLTGRPGDAGPQGKVGPSGAPGEDGRPGPPGPQGARGQPGVMGFPGPKGANGEPGKAGEKGLPGAPGLRGLPGKDGETGAAGPPGPAGPAGERGEQGAPGPSGFQGLPGPPGPPGEGGKPGDQGVPGEAGAPGLVGPRGERGFPGERGSPGAQGLQGPRGLPGTPGTDGPKGASGPAGPPGAQGPPGLQGMPGERGAAGIAGPKGDRGDVGEKGPEGAPGKDGGRGLTGPIGPPGPAGANGEKGEVGPPGPAGSAGARGAPGERGETGPPGPAGFAGPPGADGQPGAKGEQGEAGQKGDAGAPGPQGPSGAPGPQGPTGVTGPKGARGAQGPPGATGFPGAAGRVGPPGSNGNPGPPGPPGPSGKDGPKGARGDSGPPGRAGEPGLQGPAGPPGEKGEPGDDGPSGAEGPPGPQGLAGQRGIVGLPGQRGERGFPGLPGPSGEPGKQGAPGASGDRGPPGPVGPPGLTGPAGEPGREGSPGADGPPGRDGAAGVKGDRGETGAVGAPGAPGPPGSPGPAGPTGKQGDRGEAGAQGPMGPSGPAGARGIQGPQGPRGDKGEAGEPGERGLKGHRGFTGLQGLPGPPGPSGDQGASGPAGPSGPRGPPGPVGPSGKDGANGIPGPIGPPGPRGRSGETGPAGPPGNPGPPGPPGPPGPGIDMSAFAGLGPREKGPDPLQYMRADQAAGGLRQHDAEVDATLKSLNNQIESIRSPEGSRKNPARTCRDLKLCHPEWKSGDYWIDPNQGCTLDAMKVFCNMETGETCVYPNPANVPKKNWWSSKSKEKKHIWFGETINGGFHFSYGDDNLAPNTANVQMTFLRLLSTEGSQNITYHCKNSIAYLDEAAGNLKKALLIQGSNDVEIRAEGNSRFTYTALKDGCTKHTGKWGKTVIEYRSQKTSRLPIIDIAPMDIGGPEQEFGVDIGPVCFL.

The signal sequence occupies residues 1–25 (MIRLGAPQTLVLLTLLVAAVLRCQG). A propeptide spans 26–181 (QDVQEAGSCV…PPGLGGNFAA (156 aa)) (N-terminal propeptide). A VWFC domain is found at 32–90 (GSCVQDGQRYNDKDVWKPEPCRICVCDTGTVLCDDIICEDVKDCLSPEIPFGECCPICP). The interval 97-1237 (SGQPGPKGQK…PREKGPDPLQ (1141 aa)) is disordered. Basic and acidic residues-rich tracts occupy residues 105 to 116 (QKGEPGDIKDIV) and 133 to 154 (PRGD…RDGE). The segment covering 158–173 (PGNPGPPGPPGPPGPP) has biased composition (pro residues). 5-hydroxylysine is present on Lys-190. An O-linked (Gal...) hydroxylysine glycan is attached at Lys-190. Residues 201-1214 (GPMGPMGPRG…PGPPGPPGPP (1014 aa)) form a triple-helical region region. The span at 208 to 217 (PRGPPGPAGA) shows a compositional bias: pro residues. Low complexity predominate over residues 218–239 (PGPQGFQGNPGEPGEPGVSGPM). Positions 241–250 (PRGPPGPPGK) are enriched in pro residues. A compositionally biased stretch (basic and acidic residues) spans 251 to 265 (PGDDGEAGKPGKAGE). 5-hydroxylysine is present on residues Lys-287, Lys-299, and Lys-308. O-linked (Gal...) hydroxylysine glycosylation is found at Lys-287, Lys-299, and Lys-308. 2 stretches are compositionally biased toward low complexity: residues 310 to 320 (ESGSPGENGSP) and 335 to 350 (TGPA…DGQP). Residues 360–369 (GPAGGPGFPG) show a composition bias toward gly residues. Low complexity-rich tracts occupy residues 370 to 382 (APGA…PTGA) and 391 to 431 (PRGE…AGAP). Lys-374 is subject to 5-hydroxylysine. Lys-374 carries an O-linked (Gal...) hydroxylysine glycan. The span at 433 to 442 (FPGPRGPPGP) shows a compositional bias: pro residues. A 5-hydroxylysine mark is found at Lys-608 and Lys-620. Residues Lys-608 and Lys-620 are each glycosylated (O-linked (Gal...) hydroxylysine). Low complexity-rich tracts occupy residues 622 to 631 (LPGAPGLRGL) and 656 to 667 (QGAPGPSGFQGL). 4-hydroxyproline occurs at positions 659 and 668. The residue at position 670 (Pro-670) is a 3-hydroxyproline. 4-hydroxyproline occurs at positions 671 and 674. The span at 764-775 (KGDRGDVGEKGP) shows a compositional bias: basic and acidic residues. 2 stretches are compositionally biased toward low complexity: residues 833 to 848 (AGFA…PGAK) and 877 to 913 (PTGV…SNGN). Position 907 is a 3-hydroxyproline (Pro-907). 4-hydroxyproline occurs at positions 908, 914, and 920. Residues 1069-1079 (APGPPGSPGPA) show a composition bias toward pro residues. A compositionally biased stretch (basic and acidic residues) spans 1115-1129 (RGDKGEAGEPGERGL). The residue at position 1130 (Lys-1130) is a 5-hydroxylysine. Lys-1130 is a glycosylation site (O-linked (Gal...) hydroxylysine). Position 1144 is a 3-hydroxyproline (Pro-1144). Positions 1148-1157 (SGDQGASGPA) are enriched in low complexity. At Pro-1181 the chain carries 4-hydroxyproline. Pro-1186 is subject to 3-hydroxyproline. Pro-1187 bears the 4-hydroxyproline mark. Positions 1199–1216 (AGPPGNPGPPGPPGPPGP) are enriched in pro residues. A 3-hydroxyproline modification is found at Pro-1201. 2 positions are modified to 4-hydroxyproline: Pro-1202 and Pro-1205. Pro-1207 is subject to 3-hydroxyproline. Residues Pro-1208 and Pro-1211 each carry the 4-hydroxyproline modification. Pro-1213 carries the 3-hydroxyproline modification. Pro-1214 carries the 4-hydroxyproline modification. Residues 1215 to 1241 (GPGIDMSAFAGLGPREKGPDPLQYMRA) form a nonhelical region (C-terminal) region. The region spanning 1253–1487 (AEVDATLKSL…GVDIGPVCFL (235 aa)) is the Fibrillar collagen NC1 domain. Cystine bridges form between Cys-1283–Cys-1315, Cys-1323–Cys-1485, and Cys-1393–Cys-1438. Residues Asp-1301, Asn-1303, Gln-1304, Cys-1306, and Asp-1309 each contribute to the Ca(2+) site. A glycan (N-linked (GlcNAc...) asparagine) is linked at Asn-1388.

This sequence belongs to the fibrillar collagen family. In terms of assembly, homotrimers of alpha 1(II) chains. In terms of processing, the N-telopeptide is covalently linked to the helical COL2 region of alpha 1(IX), alpha 2(IX) and alpha 3(IX) chain. The C-telopeptide is covalently linked to an another site in the helical region of alpha 3(IX) COL2. Contains mostly 4-hydroxyproline. Prolines at the third position of the tripeptide repeating unit (G-X-P) are 4-hydroxylated in some or all of the chains. Post-translationally, contains 3-hydroxyproline at a few sites. This modification occurs on the first proline residue in the sequence motif Gly-Pro-Hyp, where Hyp is 4-hydroxyproline. In terms of processing, lysine residues at the third position of the tripeptide repeating unit (G-X-Y) are 5-hydroxylated in some or all of the chains. O-glycosylated on hydroxylated lysine residues. The O-linked glycan consists of a Glc-Gal disaccharide. Isoform 2 is highly expressed in juvenile chondrocyte and low in fetal chondrocyte.

It is found in the secreted. The protein resides in the extracellular space. The protein localises to the extracellular matrix. Its function is as follows. Type II collagen is specific for cartilaginous tissues. It is essential for the normal embryonic development of the skeleton, for linear growth and for the ability of cartilage to resist compressive forces. This is Collagen alpha-1(II) chain from Homo sapiens (Human).